The primary structure comprises 457 residues: Bifunctional protein GlmU (457 aa).

Positions 1-229 (MYNCAIILAA…YEEIMGVNSR (229 aa)) are pyrophosphorylase. UDP-N-acetyl-alpha-D-glucosamine contacts are provided by residues 8–11 (LAAG), lysine 22, glutamine 73, and 78–79 (GT). Aspartate 103 contacts Mg(2+). Positions 140, 155, 170, and 227 each coordinate UDP-N-acetyl-alpha-D-glucosamine. Mg(2+) is bound at residue asparagine 227. A linker region spans residues 230 to 250 (VQLSEAEIVMRKRINHKHMVN). The segment at 251-457 (GVTFIDCEST…WLDKKGLLKK (207 aa)) is N-acetyltransferase. 2 residues coordinate UDP-N-acetyl-alpha-D-glucosamine: arginine 332 and lysine 350. Residue histidine 362 is the Proton acceptor of the active site. UDP-N-acetyl-alpha-D-glucosamine contacts are provided by tyrosine 365 and asparagine 376. Acetyl-CoA contacts are provided by residues 385 to 386 (NY), alanine 422, and arginine 439.

The protein in the N-terminal section; belongs to the N-acetylglucosamine-1-phosphate uridyltransferase family. This sequence in the C-terminal section; belongs to the transferase hexapeptide repeat family. As to quaternary structure, homotrimer. Requires Mg(2+) as cofactor.

The protein resides in the cytoplasm. It carries out the reaction alpha-D-glucosamine 1-phosphate + acetyl-CoA = N-acetyl-alpha-D-glucosamine 1-phosphate + CoA + H(+). The catalysed reaction is N-acetyl-alpha-D-glucosamine 1-phosphate + UTP + H(+) = UDP-N-acetyl-alpha-D-glucosamine + diphosphate. It functions in the pathway nucleotide-sugar biosynthesis; UDP-N-acetyl-alpha-D-glucosamine biosynthesis; N-acetyl-alpha-D-glucosamine 1-phosphate from alpha-D-glucosamine 6-phosphate (route II): step 2/2. It participates in nucleotide-sugar biosynthesis; UDP-N-acetyl-alpha-D-glucosamine biosynthesis; UDP-N-acetyl-alpha-D-glucosamine from N-acetyl-alpha-D-glucosamine 1-phosphate: step 1/1. The protein operates within bacterial outer membrane biogenesis; LPS lipid A biosynthesis. Its function is as follows. Catalyzes the last two sequential reactions in the de novo biosynthetic pathway for UDP-N-acetylglucosamine (UDP-GlcNAc). The C-terminal domain catalyzes the transfer of acetyl group from acetyl coenzyme A to glucosamine-1-phosphate (GlcN-1-P) to produce N-acetylglucosamine-1-phosphate (GlcNAc-1-P), which is converted into UDP-GlcNAc by the transfer of uridine 5-monophosphate (from uridine 5-triphosphate), a reaction catalyzed by the N-terminal domain. This is Bifunctional protein GlmU from Clostridium botulinum (strain 657 / Type Ba4).